A 253-amino-acid chain; its full sequence is tRNA (guanine-N(7)-)-methyltransferase (253 aa).

The segment covering 1 to 12 has biased composition (pro residues); that stretch reads MSQTPMPQPDQA. Residues 1 to 39 form a disordered region; sequence MSQTPMPQPDQAPPVDVGQPVDEAEAKRRRFKTHGRKKG. Over residues 27–39 the composition is skewed to basic residues; the sequence is KRRRFKTHGRKKG. E84, D109, N136, and D159 together coordinate S-adenosyl-L-methionine. The active site involves D159. Residues K163, D195, and 232–235 each bind substrate; that span reads TNFE.

The protein belongs to the class I-like SAM-binding methyltransferase superfamily. TrmB family.

The catalysed reaction is guanosine(46) in tRNA + S-adenosyl-L-methionine = N(7)-methylguanosine(46) in tRNA + S-adenosyl-L-homocysteine. It participates in tRNA modification; N(7)-methylguanine-tRNA biosynthesis. In terms of biological role, catalyzes the formation of N(7)-methylguanine at position 46 (m7G46) in tRNA. This Magnetococcus marinus (strain ATCC BAA-1437 / JCM 17883 / MC-1) protein is tRNA (guanine-N(7)-)-methyltransferase.